The chain runs to 470 residues: Nuclear receptor subfamily 0 group B member 1 (470 aa).

A run of 3 repeats spans residues 1-67 (MAGE…YRCC), 68-133 (FCGK…YRCC), and 134-200 (FCGE…YRCC). Residues 1 to 253 (MAGENHQWQG…RPVALKNPQV (253 aa)) are 4 X 67 AA tandem repeats. 3 short sequence motifs (LXXLL motif) span residues 13-17 (LYNML), 80-84 (LYSML), and 146-150 (LYSLL). The stretch at 201–253 (FCGEDHPQQGSTLYCMPTSTNQAQAAPEERPRAPWWDASSGALRPVALKNPQV) is one 4; truncated repeat. The NR LBD domain occupies 215–469 (CMPTSTNQAQ…DMMLEMLCTK (255 aa)). Positions 461 to 466 (MMLEML) match the AF-2 motif motif.

It belongs to the nuclear hormone receptor family. NR0 subfamily. In terms of assembly, homodimer. Interacts with NR5A1, NR5A2, NR0B2 and with COPS2. Interacts with ESRRB; represses ESRRB activity at the GATA6 promoter.

The protein localises to the nucleus. It is found in the cytoplasm. Its function is as follows. Nuclear receptor that lacks a DNA-binding domain and acts as a corepressor that inhibits the transcriptional activity of other nuclear receptors through heterodimeric interactions. Component of a cascade required for the development of the hypothalamic-pituitary-adrenal-gonadal axis. May also have a role in the development of the embryo and in the maintenance of embryonic stem cell pluripotency. This is Nuclear receptor subfamily 0 group B member 1 (NR0B1) from Pongo pygmaeus (Bornean orangutan).